Here is a 162-residue protein sequence, read N- to C-terminus: Regulatory protein RecX (162 aa).

Belongs to the RecX family.

The protein localises to the cytoplasm. In terms of biological role, modulates RecA activity. The sequence is that of Regulatory protein RecX from Xanthomonas oryzae pv. oryzae (strain PXO99A).